The sequence spans 501 residues: Rhazimal synthase (501 aa).

The chain crosses the membrane as a helical span at residues 4–24; sequence MQLSFASAVVYSLIFFVFLLV. N-linked (GlcNAc...) asparagine glycosylation occurs at asparagine 282. Residue cysteine 442 coordinates heme.

This sequence belongs to the cytochrome P450 family. Requires heme as cofactor.

The protein resides in the membrane. The enzyme catalyses (19E)-geissoschizine + reduced [NADPH--hemoprotein reductase] + O2 = rhazimal + oxidized [NADPH--hemoprotein reductase] + 2 H2O + H(+). It carries out the reaction (19E)-geissoschizine + reduced [NADPH--hemoprotein reductase] + O2 = akuammicine + formate + oxidized [NADPH--hemoprotein reductase] + H2O + H(+). The protein operates within alkaloid biosynthesis. Functionally, a cytochrome P450 monooxygenase involved in the biosynthesis of akuammilan monoterpene indole alkaloids (MIAs) natural products, components with various biological properties such as antidiabetic, antibacterial, anti-inflammatory, anticancer, and antimalarial activities. Catalyzes the conversion of geissoschizine to rhazimal. Can also, with lower efficiency, support the conversion of geissoschizine to akuammicine. The polypeptide is Rhazimal synthase (Alstonia scholaris (Dogbane)).